Consider the following 60-residue polypeptide: MGEVTIKVSVPDNAEKAFRKAVEETAKFFNERDRFFELMNELKGVIKTDKSWMELKRDLV.

This is an uncharacterized protein from Archaeoglobus fulgidus (strain ATCC 49558 / DSM 4304 / JCM 9628 / NBRC 100126 / VC-16).